A 435-amino-acid polypeptide reads, in one-letter code: Tryptophan synthase beta chain (435 aa).

Residue Lys92 is modified to N6-(pyridoxal phosphate)lysine.

This sequence belongs to the TrpB family. In terms of assembly, tetramer of two alpha and two beta chains. It depends on pyridoxal 5'-phosphate as a cofactor.

It catalyses the reaction (1S,2R)-1-C-(indol-3-yl)glycerol 3-phosphate + L-serine = D-glyceraldehyde 3-phosphate + L-tryptophan + H2O. Its pathway is amino-acid biosynthesis; L-tryptophan biosynthesis; L-tryptophan from chorismate: step 5/5. Its function is as follows. The beta subunit is responsible for the synthesis of L-tryptophan from indole and L-serine. This Albidiferax ferrireducens (strain ATCC BAA-621 / DSM 15236 / T118) (Rhodoferax ferrireducens) protein is Tryptophan synthase beta chain.